We begin with the raw amino-acid sequence, 564 residues long: Urocanate hydratase (564 aa).

NAD(+) contacts are provided by residues 58 to 59 (GG), Gln136, 182 to 184 (GMG), Glu202, Arg207, 245 to 246 (NA), 266 to 270 (QTSAH), 276 to 277 (YL), and Tyr325. The active site involves Cys413. Gly495 contacts NAD(+).

The protein belongs to the urocanase family. NAD(+) is required as a cofactor.

The protein resides in the cytoplasm. It catalyses the reaction 4-imidazolone-5-propanoate = trans-urocanate + H2O. It participates in amino-acid degradation; L-histidine degradation into L-glutamate; N-formimidoyl-L-glutamate from L-histidine: step 2/3. In terms of biological role, catalyzes the conversion of urocanate to 4-imidazolone-5-propionate. The protein is Urocanate hydratase of Vibrio atlanticus (strain LGP32) (Vibrio splendidus (strain Mel32)).